Consider the following 508-residue polypeptide: MSSGHPSDNEEPRADLLREEEEEEEEEEDSDEDRGSTRPASPQATRECAGTQGSSRPEVTADGGTGSASGSGCRGSGACDSLFSWICRRKIRRGPYVDPARDHFRTMTRLYSSMSPAADSVNLSTQTHGAVFNLEYSPDGSVLTVACEQTEVLLFDPVSSRHIKTLVEAHEDCVNNIRFLDNRLFATCSDDTTIALWDLRKLNSKVCSLHGHASWVKNIEYDTHTRLLVTSGFDGNVITWDTNRFTEDGCPHKKFFHTRYLMRMRLTPDCSKMLISTSSGYLLILHDLDLTQSLEVGSYRILRARRPPLSTEGSSAGSRSGGPRHTIDNKNHPHREGLSPRNSLEVLTPEIPGERDRGNCITSLQLHPKGWATLLRCSSNMDDQEWTCVYEFQEGAPPRPPVSPRCSLRLTHYIEEANVGRGYIKELCFSPDGRLICSPYGYGVRLLAFDENCAELVDCMPVRTAQLREVRSIYSHSDVVLTSKFSPTHCQFASGCLSGRVALYQPHF.

The interval 1–75 (MSSGHPSDNE…GSASGSGCRG (75 aa)) is disordered. The segment covering 7 to 17 (SDNEEPRADLL) has biased composition (basic and acidic residues). The segment covering 18-32 (REEEEEEEEEEDSDE) has biased composition (acidic residues). The span at 63–75 (GGTGSASGSGCRG) shows a compositional bias: gly residues. 4 WD repeats span residues 126 to 165 (QTHG…HIKT), 169 to 207 (AHED…SKVC), 211 to 250 (GHAS…EDGC), and 256 to 295 (FHTR…QSLE). The tract at residues 307–343 (PPLSTEGSSAGSRSGGPRHTIDNKNHPHREGLSPRNS) is disordered. Residues 325 to 338 (HTIDNKNHPHREGL) are compositionally biased toward basic and acidic residues. 3 WD repeats span residues 356 to 396 (DRGN…QEGA), 419 to 457 (VGRG…AELV), and 475 to 508 (SHSD…QPHF).

The protein belongs to the WD repeat DCAF10 family.

It functions in the pathway protein modification; protein ubiquitination. In terms of biological role, may function as a substrate receptor for CUL4-DDB1 E3 ubiquitin-protein ligase complex. The sequence is that of DDB1- and CUL4-associated factor 10 (dcaf10) from Danio rerio (Zebrafish).